A 526-amino-acid polypeptide reads, in one-letter code: Neutrophil cytosol factor 2 (526 aa).

TPR repeat units lie at residues 37 to 70 (SRIC…DKHL), 71 to 104 (AVAY…LRGN), and 121 to 154 (CEVL…KSEP). The residue at position 233 (Thr233) is a Phosphothreonine. The region spanning 240–299 (LEGEAHRVLFGFVPETKEELQVMPGNIVFVLKKGNDNWATVMFNGQKGLVPCNYLEPVEL) is the SH3 1 domain. Low complexity predominate over residues 303–315 (PQQQPQEESSPQS). The tract at residues 303-346 (PQQQPQEESSPQSDIPAPPSSKAPGRPQLSPGQKQKEEPKEVKL) is disordered. Positions 336–345 (KQKEEPKEVK) are enriched in basic and acidic residues. In terms of domain architecture, PB1 spans 351–429 (PYTLKVHYKY…YCLTLWCENT (79 aa)). At Ser399 the chain carries Phosphoserine. A disordered region spans residues 433 to 458 (QGFPDEPKESEKADANNQTTEPQLKK). The segment covering 437–446 (DEPKESEKAD) has biased composition (basic and acidic residues). Residues 457 to 516 (KKGSQVEALFSYEATQPEDLEFQEGDIILVLSKVNEEWLEGECKGKVGIFPKVFVEDCAT) enclose the SH3 2 domain.

This sequence belongs to the NCF2/NOXA1 family. Component of the phagocyte NADPH oxidase complex composed of an obligatory core heterodimer formed by the membrane proteins CYBA and CYBB and the cytosolic regulatory subunits NCF1/p47-phox, NCF2/p67-phox, NCF4/p40-phox and the small GTPase RAC1 or RAC2. Part of a cytosolic complex composed at least by NCF1, NCF2 and NCF4. Interacts with NCF4. Interacts (via the C-terminal SH3 domain) with NCF1 (via C-terminus). Interacts with SYTL1 and RAC1. May interact with NOXO1. Interacts with S100A8 and calprotectin (S100A8/9). Interacts with GBP7 (via GB1/RHD3-type G domain). Interacts with CYBB; the interaction is enhanced in the presence of GBP7.

It localises to the cytoplasm. Functionally, subunit of the phagocyte NADPH oxidase complex that mediates the transfer of electrons from cytosolic NADPH to O2 to produce the superoxide anion (O2(-)). In the activated complex, electrons are first transferred from NADPH to flavin adenine dinucleotide (FAD) and subsequently transferred via two heme molecules to molecular oxygen, producing superoxide through an outer-sphere reaction. Activation of the NADPH oxidase complex is initiated by the assembly of cytosolic subunits of the NADPH oxidase complex with the core NADPH oxidase complex to form a complex at the plasma membrane or phagosomal membrane. This activation process is initiated by phosphorylation dependent binding of the cytosolic NCF1/p47-phox subunit to the C-terminus of CYBA/p22-phox. This is Neutrophil cytosol factor 2 from Homo sapiens (Human).